The sequence spans 424 residues: Transcription regulator spe-44 (424 aa).

The region spanning 65 to 150 (PLQITIPEGD…RTHMEAMTID (86 aa)) is the SAND domain. Disordered stretches follow at residues 178 to 228 (ARKS…KPRQ) and 371 to 394 (EHSV…AREF). Residues 192-210 (YEIENEMAGKEADNDDNRK) show a composition bias toward basic and acidic residues. The segment covering 378–388 (PRTSSSSQESL) has biased composition (polar residues).

The protein resides in the chromosome. Its subcellular location is the nucleus. Transcription factor which controls spermatogenesis and sperm cell fate by regulation of sperm gene expression. The polypeptide is Transcription regulator spe-44 (Caenorhabditis elegans).